The following is a 459-amino-acid chain: NADP-specific glutamate dehydrogenase (459 aa).

K116 is a catalytic residue.

Belongs to the Glu/Leu/Phe/Val dehydrogenases family. As to quaternary structure, homohexamer.

The enzyme catalyses L-glutamate + NADP(+) + H2O = 2-oxoglutarate + NH4(+) + NADPH + H(+). The polypeptide is NADP-specific glutamate dehydrogenase (GDHA) (Schwanniomyces occidentalis (Yeast)).